The sequence spans 210 residues: MSDTQQSAPDIFNTGLVPMVVEQSARGERAYDIFSRLLKERVIFLVGPVEDYQANLLVAQLLFLESENPDKDVHLYINSPGGSVTAGLAIYDTMQFIKPDVATLCVGQAASMGALLLAAGAEGKRHALPNSRMMIHQPLGGFQGQATDIDIHAREILSMRDRLNTILAHHTGQDIETIRQDTDRDNFMAAEAAAQYGLIDRVLTSRGASE.

Ser111 serves as the catalytic Nucleophile. His136 is an active-site residue.

Belongs to the peptidase S14 family. In terms of assembly, fourteen ClpP subunits assemble into 2 heptameric rings which stack back to back to give a disk-like structure with a central cavity, resembling the structure of eukaryotic proteasomes.

The protein resides in the cytoplasm. It carries out the reaction Hydrolysis of proteins to small peptides in the presence of ATP and magnesium. alpha-casein is the usual test substrate. In the absence of ATP, only oligopeptides shorter than five residues are hydrolyzed (such as succinyl-Leu-Tyr-|-NHMec, and Leu-Tyr-Leu-|-Tyr-Trp, in which cleavage of the -Tyr-|-Leu- and -Tyr-|-Trp bonds also occurs).. Its function is as follows. Cleaves peptides in various proteins in a process that requires ATP hydrolysis. Has a chymotrypsin-like activity. Plays a major role in the degradation of misfolded proteins. The sequence is that of ATP-dependent Clp protease proteolytic subunit from Halorhodospira halophila (strain DSM 244 / SL1) (Ectothiorhodospira halophila (strain DSM 244 / SL1)).